Consider the following 468-residue polypeptide: Soluble pyridine nucleotide transhydrogenase (468 aa).

38–47 (ERHYNVGGGC) contacts FAD.

It belongs to the class-I pyridine nucleotide-disulfide oxidoreductase family. The cofactor is FAD.

Its subcellular location is the cytoplasm. It catalyses the reaction NAD(+) + NADPH = NADH + NADP(+). Its function is as follows. Conversion of NADPH, generated by peripheral catabolic pathways, to NADH, which can enter the respiratory chain for energy generation. In Pectobacterium atrosepticum (strain SCRI 1043 / ATCC BAA-672) (Erwinia carotovora subsp. atroseptica), this protein is Soluble pyridine nucleotide transhydrogenase.